The chain runs to 196 residues: SAGA-associated factor 11 homolog (196 aa).

The interval 1-22 is disordered; that stretch reads MSAANMPTTTGAQGSGNQVPTT. The SGF11-type zinc-finger motif lies at 106–127; the sequence is CTCPNCDRLVAAARFAPHLEKC. Residues 144-196 form a disordered region; that stretch reads TKEGASSAHLHSAGNAGGTDDEDDVDWSSDKRRKKSNQNSRNNGSKKNNGKTF. Position 172 is a phosphoserine (serine 172). Residues 180-196 are compositionally biased toward low complexity; the sequence is NQNSRNNGSKKNNGKTF.

It belongs to the SGF11 family. Component of some SAGA transcription coactivator-HAT complexes, at least composed of Ada2b, not/nonstop, Pcaf/Gcn5, Sgf11 and Spt3. Within the SAGA complex, Sgf11, e(y)2, and not/nonstop form an additional subcomplex of SAGA called the DUB module (deubiquitination module). Interacts directly with not/nonstop. Interacts with the AMEX complex component xmas-2. Interacts with Cbp80; important for promoter recruitment of Sgf11 that is not associated with the DUB module.

The protein localises to the nucleus. Its subcellular location is the nucleoplasm. It localises to the cytoplasm. Functionally, component of the transcription regulatory histone acetylation (HAT) complex SAGA, a multiprotein complex that activates transcription by remodeling chromatin and mediating histone acetylation and deubiquitination. Within the SAGA complex, participates in a subcomplex that specifically deubiquitinates histone H2B. The SAGA complex is recruited to specific gene promoters by activators, where it is required for transcription. Required for nuclear receptor-mediated transactivation. Binds independently on SAGA to promoters in an RNA-dependent manner. Binds to mRNA and is essential for total mRNA export from the nucleus. Required to counteract heterochromatin silencing. Controls the development of neuronal connectivity in visual system by being required for accurate axon targeting in the optic lobe. Required for expression of ecdysone-induced genes such as br/broad. This Drosophila yakuba (Fruit fly) protein is SAGA-associated factor 11 homolog.